Reading from the N-terminus, the 181-residue chain is MFKKFDEKENVSNCIQLKTSVIKGIKNQLLEQFPGIEPWLNQIMPKKDPVKIVRCHEHIEILTVNGELLFFRQREGPFYPTLRLLHKYPFILPHQQVDKGAIKFVLSGANIMCPGLTSPGAKLYPAAVDTIVAIMAEGKQHALCVGVMKMSAEDIEKVNKGIGIENIHYLNDGLWHMKTYK.

Residue T81 is modified to Phosphothreonine. One can recognise a PUA domain in the interval 92 to 171; the sequence is LPHQQVDKGA…IGIENIHYLN (80 aa). At S118 the chain carries Phosphoserine.

The protein belongs to the MCTS1 family. In terms of assembly, interacts (via PUA domain) with DENR; the complex regulates translation reinitiation. Phosphorylation is critical for stabilization and promotion of cell proliferation.

Its subcellular location is the cytoplasm. Translation regulator forming a complex with DENR to promote translation reinitiation. Translation reinitiation is the process where the small ribosomal subunit remains attached to the mRNA following termination of translation of a regulatory upstream ORF (uORF), and resume scanning on the same mRNA molecule to initiate translation of a downstream ORF, usually the main ORF (mORF). The MCTS1/DENR complex is pivotal to two linked mechanisms essential for translation reinitiation. Firstly, the dissociation of deacylated tRNAs from post-termination 40S ribosomal complexes during ribosome recycling. Secondly, the recruitment in an EIF2-independent manner of aminoacylated initiator tRNA to P site of 40S ribosomes for a new round of translation. This regulatory mechanism governs the translation of more than 150 genes which translation reinitiation is MCTS1/DENR complex-dependent. Consequently, modulates various unrelated biological processes including cell cycle regulation and DNA damage signaling and repair. Notably, it positively regulates interferon gamma immunity to mycobacteria by enhancing the translation of JAK2. This is Malignant T-cell-amplified sequence 1 (Mcts1) from Mus musculus (Mouse).